Reading from the N-terminus, the 197-residue chain is MNRKTGTTTVGIKVKDGVILAADTQASLDHMVETLNIRKIIPITDRIAITTAGSVGDVQMIARILEAEARYYYFAWGRPMTTKAMANLLSNILNENKWFPYLVQIIIGGYVDEPTIANLDPYGGLIFDNYTATGSGTPFAIAILEEGYKENLGIEEAKELAIKAIKAAGSRDVYTGSKKVQVVTITKEGMQEEFIKL.

A propeptide spans 1–6 (MNRKTG) (removed in mature form; by autocatalysis). Threonine 7 acts as the Nucleophile in catalysis.

The protein belongs to the peptidase T1B family. In terms of assembly, the 20S proteasome core is composed of 14 alpha and 14 beta subunits that assemble into four stacked heptameric rings, resulting in a barrel-shaped structure. The two inner rings, each composed of seven catalytic beta subunits, are sandwiched by two outer rings, each composed of seven alpha subunits. The catalytic chamber with the active sites is on the inside of the barrel. Has a gated structure, the ends of the cylinder being occluded by the N-termini of the alpha-subunits. Is capped at one or both ends by the proteasome regulatory ATPase, PAN.

It localises to the cytoplasm. It carries out the reaction Cleavage of peptide bonds with very broad specificity.. Its activity is regulated as follows. The formation of the proteasomal ATPase PAN-20S proteasome complex, via the docking of the C-termini of PAN into the intersubunit pockets in the alpha-rings, triggers opening of the gate for substrate entry. Interconversion between the open-gate and close-gate conformations leads to a dynamic regulation of the 20S proteasome proteolysis activity. Functionally, component of the proteasome core, a large protease complex with broad specificity involved in protein degradation. This is Proteasome subunit beta 1 from Pyrococcus horikoshii (strain ATCC 700860 / DSM 12428 / JCM 9974 / NBRC 100139 / OT-3).